The chain runs to 154 residues: Endoribonuclease YbeY (154 aa).

Positions 114, 118, and 124 each coordinate Zn(2+).

This sequence belongs to the endoribonuclease YbeY family. Zn(2+) serves as cofactor.

The protein resides in the cytoplasm. Functionally, single strand-specific metallo-endoribonuclease involved in late-stage 70S ribosome quality control and in maturation of the 3' terminus of the 16S rRNA. This chain is Endoribonuclease YbeY, found in Histophilus somni (strain 2336) (Haemophilus somnus).